A 401-amino-acid polypeptide reads, in one-letter code: Type 3 secretion system translocon protein SctE (401 aa).

Residues 129–160 (IQRLHEQNMKKIEENQEKIKETEENAKQVKKS) are a coiled coil. 2 consecutive transmembrane segments (helical) span residues 176 to 196 (VIVG…AMMV) and 224 to 244 (ILGP…TVMT). Residues 345 to 379 (LALNKADMAALQSIIDRLKEELSHLSESHQQVMEL) are a coiled coil.

It belongs to the SctE/SipB/YopB family. The core secretion machinery of the T3SS is composed of approximately 20 different proteins, including cytoplasmic components, a base, an export apparatus and a needle. This subunit is involved in the formation of a pore, called the translocon, in host membrane. Interacts with YopD/SctB. Together with YopD/SctB, forms a multimeric integral membrane complex.

The protein resides in the secreted. The protein localises to the host membrane. In terms of biological role, component of the type III secretion system (T3SS), also called injectisome, which is used to inject bacterial effector proteins into eukaryotic host cells. YopB/SctE and YopD/SctB are inserted into the host membrane where they form a pore and allow the translocation of effector proteins into the cytosol of target cells. Is an essential virulence determinant. Required for YopE and YopH translocation. Shows membrane disruptive activity in vitro. Functionally, interaction with the host cell triggers a signaling response, via activation of the small GTPase Ras, the MAPK kinases ERK and JNK and the nuclear factor NF-kappa-B pathways, and production of the proinflammatory cytokine interleukin-8 (IL-8). YopB/SctE-dependent signaling response is counteracted by YopE, YopH and YopJ in infected host cells. YopB/SctE is directly responsible for signaling and its insertion in the membrane is important to activate the signaling response in the host cell. In Yersinia pseudotuberculosis serotype I (strain IP32953), this protein is Type 3 secretion system translocon protein SctE.